Here is a 398-residue protein sequence, read N- to C-terminus: Enoyl-[acyl-carrier-protein] reductase [NADH] (398 aa).

NAD(+)-binding positions include 48-53 (GASTGY), 74-75 (FE), 111-112 (DG), and 139-140 (LA). Residue Tyr-225 participates in substrate binding. Tyr-235 functions as the Proton donor in the catalytic mechanism. Residues Lys-244 and 273–275 (VVT) each bind NAD(+).

It belongs to the TER reductase family. Monomer.

The catalysed reaction is a 2,3-saturated acyl-[ACP] + NAD(+) = a (2E)-enoyl-[ACP] + NADH + H(+). Its pathway is lipid metabolism; fatty acid biosynthesis. In terms of biological role, involved in the final reduction of the elongation cycle of fatty acid synthesis (FAS II). Catalyzes the reduction of a carbon-carbon double bond in an enoyl moiety that is covalently linked to an acyl carrier protein (ACP). In Variovorax paradoxus (strain S110), this protein is Enoyl-[acyl-carrier-protein] reductase [NADH].